A 680-amino-acid chain; its full sequence is Tumor protein 63 (680 aa).

A transcription activation region spans residues 1–107 (MNFETSRCAT…MQDSDLSDPM (107 aa)). The segment covering 123–157 (QIQNGSSSTSPYNTDHAQNSVTAPSPYAQPSSTFD) has biased composition (polar residues). The disordered stretch occupies residues 123–171 (QIQNGSSSTSPYNTDHAQNSVTAPSPYAQPSSTFDALSPSPAIPSNTDY). The DNA-binding element occupies 170-362 (DYPGPHSFDV…KADEDSIRKQ (193 aa)). The Zn(2+) site is built by C244, H247, C308, and C312. Over residues 351 to 360 (DRKADEDSIR) the composition is skewed to basic and acidic residues. 2 disordered regions span residues 351 to 393 (DRKA…IKKR) and 436 to 472 (RQQQ…MNSM). Positions 352-388 (RKADEDSIRKQQVSDSAKNGDGTKRPFRQNTHGIQMT) are interaction with HIPK2. A compositionally biased stretch (polar residues) spans 379-389 (RQNTHGIQMTS). The oligomerization stretch occupies residues 394-443 (RSPDDELLYLPVRGRETYEMLLKIKESLELMQYLPQHTIETYRQQQQQQH). Low complexity predominate over residues 437–463 (QQQQQQHQHLLQKQTSMQSQSSYGNSS). The 67-residue stretch at 541–607 (PPYPTDCSIV…WKGILDHRQL (67 aa)) folds into the SAM domain. Positions 610-680 (FSSPPHLLRT…KQQRIKEEGE (71 aa)) are transactivation inhibition. K676 is covalently cross-linked (Glycyl lysine isopeptide (Lys-Gly) (interchain with G-Cter in SUMO)).

The protein belongs to the p53 family. Binds DNA as a homotetramer. Isoform composition of the tetramer may determine transactivation activity. Interacts with HIPK2. Interacts with SSRP1, leading to stimulate coactivator activity. Interacts with PDS5A. Interacts (via activation domain) with NOC2L. Interacts with WWP1. The cofactor is Zn(2+). May be sumoylated. In terms of processing, ubiquitinated. Polyubiquitination involves WWP1 and leads to proteasomal degradation of this protein. In terms of tissue distribution, widely expressed, notably in thymus, prostate, placenta and skeletal muscle, although the precise isoform varies according to tissue type. Progenitor cell layers of skin, breast and prostate express high levels of DeltaN-type isoforms.

The protein localises to the nucleus. In terms of biological role, acts as a sequence specific DNA binding transcriptional activator or repressor. The isoforms contain a varying set of transactivation and auto-regulating transactivation inhibiting domains thus showing an isoform specific activity. May be required in conjunction with TP73/p73 for initiation of p53/TP53 dependent apoptosis in response to genotoxic insults and the presence of activated oncogenes. Involved in Notch signaling by probably inducing JAG1 and JAG2. Activates transcription of the p21 promoter. Activates RIPK4 transcription. Plays a role in the regulation of epithelial morphogenesis. The ratio of DeltaN-type and TA*-type isoforms may govern the maintenance of epithelial stem cell compartments and regulate the initiation of epithelial stratification from the undifferentiated embryonal ectoderm. Required for limb formation from the apical ectodermal ridge. The sequence is that of Tumor protein 63 (Tp63) from Mus musculus (Mouse).